The chain runs to 49 residues: Sperm protamine P1 (49 aa).

It belongs to the protamine P1 family. As to expression, testis.

It is found in the nucleus. The protein localises to the chromosome. Protamines substitute for histones in the chromatin of sperm during the haploid phase of spermatogenesis. They compact sperm DNA into a highly condensed, stable and inactive complex. In Pteropus hypomelanus (Island flying fox), this protein is Sperm protamine P1 (PRM1).